Here is a 916-residue protein sequence, read N- to C-terminus: Major intrinsically disordered Notch2-binding receptor 1 (916 aa).

At 1 to 891 the chain is on the cytoplasmic side; it reads METSQETSLF…AEFRRAKVCK (891 aa). 5 disordered regions span residues 390–409, 553–591, 648–675, 705–726, and 745–782; these read EEKLHYPNASSQTPNFPAPE, KSDCDSSPEHNLTKIANGVPNSKGDKGNRPENTHHSEEE, SLTSEGPSDDSASPRMFHAHSGSHGPKL, TRPSSRSLTEENSATESKIASI, and NEEEIKDTGPGDNKDWHRKSKEADRQYDIPPQHRLPKQ. Composition is skewed to basic and acidic residues over residues 553–564 and 575–591; these read KSDCDSSPEHNL and KGDKGNRPENTHHSEEE. Serine 711 carries the phosphoserine modification. Basic and acidic residues predominate over residues 750 to 771; sequence KDTGPGDNKDWHRKSKEADRQY. A helical transmembrane segment spans residues 892-912; it reads IAALIAAAACTVILVIVVPIC. The Extracellular portion of the chain corresponds to 913–916; that stretch reads TMKS.

Belongs to the MINAR family. As to quaternary structure, interacts with NOTCH2; this interaction increases MINAR1 stability. Interacts (via N-terminus) with DEPTOR (via PDZ domain); this interaction may stabilize DEPTOR protein by impairing its ubiquitination. In terms of tissue distribution, widely expressed, including in breast epithelial cells and endothelial cells (at protein level). Expression is down-regulated in advanced breast tumors (at protein level).

The protein localises to the cell membrane. Functionally, intrinsically disordered protein which may negatively regulate mTOR signaling pathway by stabilizing the mTOR complex component DEPTOR. Negatively regulates angiogenesis. Negatively regulates cell growth. Negatively regulates neurite outgrowth in hippocampal neurons. The polypeptide is Major intrinsically disordered Notch2-binding receptor 1 (Homo sapiens (Human)).